The following is a 315-amino-acid chain: Homoserine kinase (315 aa).

Position 97 to 107 (97 to 107) interacts with ATP; it reads PPARGLGSSAT.

Belongs to the GHMP kinase family. Homoserine kinase subfamily.

It is found in the cytoplasm. The enzyme catalyses L-homoserine + ATP = O-phospho-L-homoserine + ADP + H(+). The protein operates within amino-acid biosynthesis; L-threonine biosynthesis; L-threonine from L-aspartate: step 4/5. Its function is as follows. Catalyzes the ATP-dependent phosphorylation of L-homoserine to L-homoserine phosphate. This is Homoserine kinase from Synechococcus sp. (strain CC9902).